Reading from the N-terminus, the 103-residue chain is MAAVSLSVSTVKPLGDRVFVKVSESEEKTAGGILLPDTAKEKPQVGEVVQVGPGKRNDDGSRQAPEVGVGDKVLYSKYAGTDIKLSTDEYVLLSEKDILAVVN.

It belongs to the GroES chaperonin family. In terms of assembly, heptamer of 7 subunits arranged in a ring. Interacts with the chaperonin GroEL.

It is found in the cytoplasm. Together with the chaperonin GroEL, plays an essential role in assisting protein folding. The GroEL-GroES system forms a nano-cage that allows encapsulation of the non-native substrate proteins and provides a physical environment optimized to promote and accelerate protein folding. GroES binds to the apical surface of the GroEL ring, thereby capping the opening of the GroEL channel. The polypeptide is Co-chaperonin GroES (Prochlorococcus marinus (strain MIT 9313)).